Here is a 152-residue protein sequence, read N- to C-terminus: Ribonuclease pancreatic (152 aa).

An N-terminal signal peptide occupies residues 1–24 (MALDKSVILLPLLVLVLLVLGCLG). K31 and R34 together coordinate substrate. H36 acts as the Proton acceptor in catalysis. N46 is a glycosylation site (N-linked (GlcNAc...) asparagine). Disulfide bonds link C50–C108, C64–C119, C82–C134, and C89–C96. Substrate contacts are provided by residues 65-69 (KPVNT), K90, and R109. The N-linked (GlcNAc...) asparagine glycan is linked to N112. The active-site Proton donor is H143.

It belongs to the pancreatic ribonuclease family. Monomer. Interacts with and forms tight 1:1 complexes with RNH1. Dimerization of two such complexes may occur. Interaction with RNH1 inhibits this protein.

It localises to the secreted. It carries out the reaction an [RNA] containing cytidine + H2O = an [RNA]-3'-cytidine-3'-phosphate + a 5'-hydroxy-ribonucleotide-3'-[RNA].. The enzyme catalyses an [RNA] containing uridine + H2O = an [RNA]-3'-uridine-3'-phosphate + a 5'-hydroxy-ribonucleotide-3'-[RNA].. In terms of biological role, endonuclease that catalyzes the cleavage of RNA on the 3' side of pyrimidine nucleotides. Acts on single-stranded and double-stranded RNA. In Papio hamadryas (Hamadryas baboon), this protein is Ribonuclease pancreatic (RNASE1).